A 157-amino-acid chain; its full sequence is Phosphopantetheine adenylyltransferase (157 aa).

Substrate is bound at residue Ser8. ATP-binding positions include 8 to 9 (SF) and His16. Residues Lys40, Leu72, and Arg86 each contribute to the substrate site. Residues 87 to 89 (GLR), Glu97, and 121 to 127 (FGTISSS) contribute to the ATP site.

Belongs to the bacterial CoaD family. Homohexamer. It depends on Mg(2+) as a cofactor.

Its subcellular location is the cytoplasm. The catalysed reaction is (R)-4'-phosphopantetheine + ATP + H(+) = 3'-dephospho-CoA + diphosphate. The protein operates within cofactor biosynthesis; coenzyme A biosynthesis; CoA from (R)-pantothenate: step 4/5. Functionally, reversibly transfers an adenylyl group from ATP to 4'-phosphopantetheine, yielding dephospho-CoA (dPCoA) and pyrophosphate. This is Phosphopantetheine adenylyltransferase from Cutibacterium acnes (strain DSM 16379 / KPA171202) (Propionibacterium acnes).